Consider the following 272-residue polypeptide: ATP synthase subunit a (272 aa).

The next 6 membrane-spanning stretches (helical) occupy residues 42 to 62 (IDSL…AGFV), 108 to 128 (FVWI…LPCI), 140 to 162 (ILPS…LMIF), 177 to 197 (LIYH…LEII), 219 to 239 (LIFI…LSVP), and 241 to 261 (AIFH…LTII).

This sequence belongs to the ATPase A chain family. As to quaternary structure, F-type ATPases have 2 components, CF(1) - the catalytic core - and CF(0) - the membrane proton channel. CF(1) has five subunits: alpha(3), beta(3), gamma(1), delta(1), epsilon(1). CF(0) has three main subunits: a(1), b(2) and c(9-12). The alpha and beta chains form an alternating ring which encloses part of the gamma chain. CF(1) is attached to CF(0) by a central stalk formed by the gamma and epsilon chains, while a peripheral stalk is formed by the delta and b chains.

It localises to the cell inner membrane. Functionally, key component of the proton channel; it plays a direct role in the translocation of protons across the membrane. The chain is ATP synthase subunit a from Blochmanniella floridana.